We begin with the raw amino-acid sequence, 712 residues long: Ribosome-releasing factor 2, mitochondrial (712 aa).

The N-terminal 28 residues, Met1–Tyr28, are a transit peptide targeting the mitochondrion. Positions Asp30 to Asn309 constitute a tr-type G domain. Residues Ala39 to Thr46, Asp103 to His107, and Asn157 to Asp160 contribute to the GTP site.

Belongs to the TRAFAC class translation factor GTPase superfamily. Classic translation factor GTPase family. EF-G/EF-2 subfamily.

It localises to the mitochondrion. Mitochondrial GTPase that mediates the disassembly of ribosomes from messenger RNA at the termination of mitochondrial protein biosynthesis. Not involved in the GTP-dependent ribosomal translocation step during translation elongation. The sequence is that of Ribosome-releasing factor 2, mitochondrial from Drosophila virilis (Fruit fly).